The primary structure comprises 155 residues: Large ribosomal subunit protein uL15 (155 aa).

Residues Met-1–Thr-13 are compositionally biased toward basic and acidic residues. Residues Met-1–Arg-41 are disordered. Over residues Arg-21–Val-35 the composition is skewed to gly residues.

The protein belongs to the universal ribosomal protein uL15 family. As to quaternary structure, part of the 50S ribosomal subunit.

Its function is as follows. Binds to the 23S rRNA. The protein is Large ribosomal subunit protein uL15 of Chelativorans sp. (strain BNC1).